A 1278-amino-acid polypeptide reads, in one-letter code: Dynactin subunit 1 (1278 aa).

The segment at 1–25 is disordered; sequence MAQSKRHVYSRTPSGSRMSAEASAR. A CAP-Gly domain is found at 48 to 90; the sequence is GATLFATGKWVGVILDEAKGKNDGTVQGRKYFTCDEGHGIFVR. The interval 100–223 is disordered; sequence GADTTSPETP…SKEEEGLRAQ (124 aa). Residues 102–114 are compositionally biased toward polar residues; it reads DTTSPETPDSSAS. Phosphothreonine is present on T108. Residues 129 to 152 show a composition bias toward basic residues; it reads SKLRGLKPKKAPTARKTTTRRPKP. Phosphothreonine; by SLK is present on residues T145, T146, and T147. Low complexity predominate over residues 161–184; sequence AGASSSLGPSGSASAGELSSSEPS. Phosphoserine; by PLK1 is present on S179. S212 is subject to Phosphoserine; by CDK1. Coiled coils occupy residues 213-547, 943-1049, and 1182-1211; these read PSKE…RQQQ, LKLE…EGLR, and SAQL…KETV. Residues 214 to 223 show a composition bias toward basic and acidic residues; sequence SKEEEGLRAQ. Residues 911–1278 form an interaction with HPS6 region; sequence EYDAERPPSK…LHQLHSRLIS (368 aa).

It belongs to the dynactin 150 kDa subunit family. Monomer and homodimer. Subunit of dynactin, a multiprotein complex part of a tripartite complex with dynein and a adapter, such as BICDL1, BICD2 or HOOK3. The dynactin complex is built around ACTR1A/ACTB filament and consists of an actin-related filament composed of a shoulder domain, a pointed end and a barbed end. Its length is defined by its flexible shoulder domain. The soulder is composed of 2 DCTN1 subunits, 4 DCTN2 and 2 DCTN3. DCTN1/p150(glued) binds directly to microtubules and to cytoplasmic dynein. The 4 DCNT2 (via N-terminus) bind the ACTR1A filament and act as molecular rulers to determine the length. The pointed end is important for binding dynein-dynactin cargo adapters. Consists of 4 subunits: ACTR10, DCNT4, DCTN5 and DCTN6. The barbed end is composed of a CAPZA1:CAPZB heterodimers, which binds ACTR1A/ACTB filament and dynactin and stabilizes dynactin. Interacts with the C-terminus of MAPRE1, MAPRE2 and MAPRE3. Interacts (via C-terminus) with SNX6. Interacts with CLN3, DYNAP, ECPAS and FBXL5. Interacts with MISP; this interaction regulates its distribution at the cell cortex. Interacts with CEP131. Interacts with CEP126. Interacts with CLIP1. Interacts with dynein intermediate chain and dynein heavy chain. Interacts with PLK1 (via POLO-box domain). Interacts with TBCB. Binds preferentially to tyrosinated microtubules than to detyrosinated microtubules. Interacts with PARD6A. Interacts with HPS6. Interacts with KIF3A. Interacts with BICD2. Interacts with DST (isoform 9). Interacts with DST (isoform 1). Identified in a complex with MREG and RILP. Interacts with BCCIP (isoform 2/alpha). Interacts with DCDC1. Interacts with AKNA. Interacts with DYNC1I2. Interacts with RUFY3 and RUFY4. Ubiquitinated by a SCF complex containing FBXL5, leading to its degradation by the proteasome. In terms of processing, phosphorylation by SLK at Thr-145, Thr-146 and Thr-147 targets DCTN1 to the centrosome. It is uncertain if SLK phosphorylates all three threonines or one or two of them. PLK1-mediated phosphorylation at Ser-179 is essential for its localization in the nuclear envelope, promotes its dissociation from microtubules during early mitosis and positively regulates nuclear envelope breakdown during prophase. As to expression, brain.

It is found in the cytoplasm. Its subcellular location is the cytoskeleton. The protein localises to the microtubule organizing center. The protein resides in the centrosome. It localises to the centriole. It is found in the spindle. Its subcellular location is the nucleus envelope. The protein localises to the cell cortex. Part of the dynactin complex that activates the molecular motor dynein for ultra-processive transport along microtubules. Plays a key role in dynein-mediated retrograde transport of vesicles and organelles along microtubules by recruiting and tethering dynein to microtubules. Binds to both dynein and microtubules providing a link between specific cargos, microtubules and dynein. Essential for targeting dynein to microtubule plus ends, recruiting dynein to membranous cargos and enhancing dynein processivity (the ability to move along a microtubule for a long distance without falling off the track). Can also act as a brake to slow the dynein motor during motility along the microtubule. Can regulate microtubule stability by promoting microtubule formation, nucleation and polymerization and by inhibiting microtubule catastrophe in neurons. Inhibits microtubule catastrophe by binding both to microtubules and to tubulin, leading to enhanced microtubule stability along the axon. Plays a role in metaphase spindle orientation. Plays a role in centriole cohesion and subdistal appendage organization and function. Its recruitment to the centriole in a KIF3A-dependent manner is essential for the maintenance of centriole cohesion and the formation of subdistal appendage. Also required for microtubule anchoring at the mother centriole. Plays a role in primary cilia formation. This is Dynactin subunit 1 from Homo sapiens (Human).